The chain runs to 347 residues: tRNA N6-adenosine threonylcarbamoyltransferase (347 aa).

Positions 111 and 115 each coordinate Fe cation. Residues 134 to 138 (LVSGG), Asp167, Gly180, and Asn277 contribute to the substrate site. Asp305 contributes to the Fe cation binding site.

The protein belongs to the KAE1 / TsaD family. Fe(2+) is required as a cofactor.

It localises to the cytoplasm. It carries out the reaction L-threonylcarbamoyladenylate + adenosine(37) in tRNA = N(6)-L-threonylcarbamoyladenosine(37) in tRNA + AMP + H(+). Functionally, required for the formation of a threonylcarbamoyl group on adenosine at position 37 (t(6)A37) in tRNAs that read codons beginning with adenine. Is involved in the transfer of the threonylcarbamoyl moiety of threonylcarbamoyl-AMP (TC-AMP) to the N6 group of A37, together with TsaE and TsaB. TsaD likely plays a direct catalytic role in this reaction. The polypeptide is tRNA N6-adenosine threonylcarbamoyltransferase (Ralstonia pickettii (strain 12J)).